Consider the following 1137-residue polypeptide: Phytochrome C (1137 aa).

The span at 1–18 shows a compositional bias: low complexity; the sequence is MSSSRSNNRATCSRSSSA. Residues 1-27 are disordered; it reads MSSSRSNNRATCSRSSSARSKHSARVV. Residues 217–400 form the GAF domain; sequence NLSLLCDVLV…VFGIQINKEV (184 aa). C322 serves as a coordination point for phytochromobilin. PAS domains are found at residues 620-690 and 750-824; these read VTNE…LQGI and IQGD…TKLS. One can recognise a Histidine kinase domain in the interval 904 to 1124; that stretch reads YIRQELRNPL…IVLVEFPVAQ (221 aa).

This sequence belongs to the phytochrome family. In terms of assembly, homodimer. Contains one covalently linked phytochromobilin chromophore.

Functionally, regulatory photoreceptor which exists in two forms that are reversibly interconvertible by light: the Pr form that absorbs maximally in the red region of the spectrum and the Pfr form that absorbs maximally in the far-red region. Photoconversion of Pr to Pfr induces an array of morphogenic responses, whereas reconversion of Pfr to Pr cancels the induction of those responses. Pfr controls the expression of a number of nuclear genes including those encoding the small subunit of ribulose-bisphosphate carboxylase, chlorophyll A/B binding protein, protochlorophyllide reductase, rRNA, etc. It also controls the expression of its own gene(s) in a negative feedback fashion. The polypeptide is Phytochrome C (PHYC) (Oryza sativa subsp. indica (Rice)).